The sequence spans 570 residues: Sulfite reductase [NADPH] hemoprotein beta-component (570 aa).

The [4Fe-4S] cluster site is built by Cys-434, Cys-440, Cys-479, and Cys-483. Cys-483 contacts siroheme.

This sequence belongs to the nitrite and sulfite reductase 4Fe-4S domain family. In terms of assembly, alpha(8)-beta(8). The alpha component is a flavoprotein, the beta component is a hemoprotein. Siroheme serves as cofactor. Requires [4Fe-4S] cluster as cofactor.

It carries out the reaction hydrogen sulfide + 3 NADP(+) + 3 H2O = sulfite + 3 NADPH + 4 H(+). It participates in sulfur metabolism; hydrogen sulfide biosynthesis; hydrogen sulfide from sulfite (NADPH route): step 1/1. Component of the sulfite reductase complex that catalyzes the 6-electron reduction of sulfite to sulfide. This is one of several activities required for the biosynthesis of L-cysteine from sulfate. The sequence is that of Sulfite reductase [NADPH] hemoprotein beta-component from Shigella flexneri.